Reading from the N-terminus, the 1032-residue chain is MALIMEPVSKWSPSQVVDWMKGLDDCLQQYIKNFEREKISGDQLLRITHQELEDLGVSRIGHQELILEAVDLLCALNYGLETENLKTLSHKLNASAKNLQNFITGRRRSGHYDGRTSRKLPNDFLTSVVDLIGAAKSLLAWLDRSPFAAVTDYSVTRNNVIQLCLELTTIVQQDCTVYETENKILHVCKTLSGVCDHIISLSSDPLVSQSAHLEVIQLANIKPSEGLGMYIKSTYDGLHVITGTTENSPADRCKKIHAGDEVIQVNHQTVVGWQLKNLVNALREDPSGVILTLKKRPQSMLTSAPALLKNMRWKPLALQPLIPRSPTSSVATPSSTISTPTKRDSSALQDLYIPPPPAEPYIPRDEKGNLPCEDLRGHMVGKPVHKGSESPNSFLDQEYRKRFNIVEEDTVLYCYEYEKGRSSSQGRRESTPTYGKLRPISMPVEYNWVGDYEDPNKMKRDSRRENSLLRYMSNEKIAQEEYMFQRNSKKDTGKKSKKKGDKSTSPTHYSLLPSLQMDALRQDIMGTPVPETTLYHTFQQSSLQHKSKKKNKGAIAGKSKRRISCKDLGRGDCEGWLWKKKDAKSYFSQKWKKYWFVLKDASLYWYINEEDEKAEGFISLPEFKIDRASECRKKYAFKACHPKIKSFYFAAEHLDDMNRWLNRINMLTAGYAERERIKQEQDYWSESDKEEADTPSTPKQDSPPPPYDTYPRPPSMSCASPYVEAKHSRLSSTETSQSQSSHEEFRQEVTGSSAVSPIRKTASQRRSWQDLIETPLTSSGLHYLQTLPLEDSVFSDSAAISPEHRRQSTLPTQKCHLQDHYGPYPLAESERMQVLNGNGGKPRSFTLPRDSGFNHCCLNAPVSACDPQDDIQPPEVEEEEEEEEEEAAGENIGEKNENREEKLGDSLQDLYRALEEASLSPLGEHRISTKIEYKLSFIKRCNDPVMNEKLHRLRILKSTLKAREGEVAIIDKVLDNPDLTSKEFQQWKQMYLDLFLDICQNTTSNDPLSISSEVDVITSSLTHTHSYIETHV.

Residues 11–76 (WSPSQVVDWM…LEAVDLLCAL (66 aa)) form the SAM domain. Residue S12 is modified to Phosphoserine. Positions 84-178 (NLKTLSHKLN…TIVQQDCTVY (95 aa)) constitute a CRIC domain. Residues 215–297 (VIQLANIKPS…GVILTLKKRP (83 aa)) form the PDZ domain. Low complexity predominate over residues 324-340 (RSPTSSVATPSSTISTP). Residues 324 to 349 (RSPTSSVATPSSTISTPTKRDSSALQ) are disordered. Positions 332-515 (TPSSTISTPT…PTHYSLLPSL (184 aa)) constitute a DUF1170 domain. S338 and S390 each carry phosphoserine. Residues 480-509 (EEYMFQRNSKKDTGKKSKKKGDKSTSPTHY) are disordered. Positions 570 to 669 (RGDCEGWLWK…WLNRINMLTA (100 aa)) constitute a PH domain. The interval 682–766 (DYWSESDKEE…PIRKTASQRR (85 aa)) is disordered. Y683 carries the post-translational modification Phosphotyrosine. The span at 683 to 693 (YWSESDKEEAD) shows a compositional bias: acidic residues. Phosphoserine is present on residues S685 and S687. Over residues 701–714 (DSPPPPYDTYPRPP) the composition is skewed to pro residues. Low complexity predominate over residues 730 to 740 (LSSTETSQSQS). Residues S756 and S767 each carry the phosphoserine modification. Residues 866-900 (DPQDDIQPPEVEEEEEEEEEEAAGENIGEKNENRE) form a disordered region. Residues 874-917 (PEVEEEEEEEEEEAAGENIGEKNENREEKLGDSLQDLYRALEEA) are a coiled coil. Over residues 875–888 (EVEEEEEEEEEEAA) the composition is skewed to acidic residues. The residue at position 906 (S906) is a Phosphoserine.

This sequence belongs to the CNKSR family. In terms of assembly, interacts with RAF1, RAB2L and RAL GTPase proteins. Interacts with DLG4 and AIP1. Phosphorylated on tyrosine. In terms of tissue distribution, expressed in neurons and localized in the cell body and neurites.

The protein localises to the cytoplasm. The protein resides in the membrane. Its function is as follows. May function as an adapter protein or regulator of Ras signaling pathways, in synaptic junctions. The polypeptide is Connector enhancer of kinase suppressor of ras 2 (Cnksr2) (Rattus norvegicus (Rat)).